Consider the following 414-residue polypeptide: Ceramide synthase 5 (414 aa).

The Lumenal portion of the chain corresponds to 1-43; the sequence is MATAAAETLGLLWGWLWSESFWLPQNVSWADLEGPGDGYGYPR. N-linked (GlcNAc...) asparagine glycosylation occurs at N26. The chain crosses the membrane as a helical span at residues 44-64; sequence AQHVLSVFPLAVCIFSVRMLF. The segment at 75 to 136 is homeobox-like; that stretch reads RVGIKDSPVN…RHRRNQDKPP (62 aa). Residues 139–340 form the TLC domain; the sequence is TKFCESMWRF…IVQTASKALS (202 aa). 4 helical membrane-spanning segments follow: residues 148–168, 187–207, 214–234, and 272–292; these read FTYY…MPWF, LYYY…SQFI, FLMM…SYVN, and LFVI…PLWI. Positions 299–309 match the Last loop motif motif; it reads ESWEIIGPYPS. Residues 312–332 traverse the membrane as a helical segment; it reads LFNALLLILQVLHAIWSYLIV. The Cytoplasmic segment spans residues 333 to 414; it reads QTASKALSRG…RASPHLHSCD (82 aa). The segment at 347–373 is disordered; it reads DDRSDVESSSEEEDETTHKNNLSGSSS.

As to quaternary structure, interacts with PAQR4; the interaction regulates the stability and activity of CERS5 and is inhibited in presence of ceramides. Phosphorylated at the C-terminus by CK2. As to expression, ubiquitously expressed, with highest levels in testis and kidney. Expressed in pulmonary epithelia.

The protein localises to the endoplasmic reticulum membrane. It carries out the reaction a sphingoid base + hexadecanoyl-CoA = an N-hexadecanoyl-sphingoid base + CoA + H(+). The enzyme catalyses sphinganine + hexadecanoyl-CoA = N-hexadecanoylsphinganine + CoA + H(+). It catalyses the reaction hexadecasphinganine + hexadecanoyl-CoA = N-hexadecanoylhexadecasphinganine + CoA + H(+). The catalysed reaction is sphing-4-enine + hexadecanoyl-CoA = N-hexadecanoylsphing-4-enine + CoA + H(+). It carries out the reaction 2-hydroxyhexadecanoyl-CoA + sphinganine = N-(2-hydroxyhexadecanoyl)-sphinganine + CoA + H(+). The enzyme catalyses sphinganine + tetradecanoyl-CoA = N-(tetradecanoyl)-sphinganine + CoA + H(+). It catalyses the reaction sphinganine + octadecanoyl-CoA = N-(octadecanoyl)-sphinganine + CoA + H(+). The catalysed reaction is sphinganine + (9Z)-octadecenoyl-CoA = N-(9Z-octadecenoyl)-sphinganine + CoA + H(+). It carries out the reaction a fatty acyl-CoA + sphing-4-enine = an N-acylsphing-4-enine + CoA + H(+). The enzyme catalyses tetracosenoyl-CoA + sphing-4-enine = N-(tetracosenoyl)-sphing-4-enine + CoA + H(+). It participates in lipid metabolism; sphingolipid metabolism. Inhibited by fumonisin B1. Ceramide synthase that catalyzes the transfer of the acyl chain from acyl-CoA to a sphingoid base, with high selectivity toward palmitoyl-CoA (hexadecanoyl-CoA; C16:0-CoA). Can use other acyl donors, but with less efficiency. N-acylates sphinganine and sphingosine bases to form dihydroceramides and ceramides in de novo synthesis and salvage pathways, respectively. Plays a role in de novo ceramide synthesis and surfactant homeostasis in pulmonary epithelia. The protein is Ceramide synthase 5 of Mus musculus (Mouse).